A 265-amino-acid polypeptide reads, in one-letter code: Undecaprenyl-diphosphatase (265 aa).

The next 8 helical transmembrane spans lie at 7 to 27, 45 to 65, 86 to 106, 108 to 128, 145 to 165, 186 to 206, 214 to 234, and 245 to 265; these read VIVS…PISS, TKIL…YFFH, LHIL…YKKI, LLFN…FLLI, ISLL…YPGF, IEFS…YDFI, ILDL…SILC, and TSLI…YFIN.

This sequence belongs to the UppP family.

Its subcellular location is the cell membrane. It catalyses the reaction di-trans,octa-cis-undecaprenyl diphosphate + H2O = di-trans,octa-cis-undecaprenyl phosphate + phosphate + H(+). Functionally, catalyzes the dephosphorylation of undecaprenyl diphosphate (UPP). Confers resistance to bacitracin. In Buchnera aphidicola subsp. Acyrthosiphon pisum (strain 5A), this protein is Undecaprenyl-diphosphatase.